Here is a 1775-residue protein sequence, read N- to C-terminus: Stereocilin (1775 aa).

An N-terminal signal peptide occupies residues 1 to 22; sequence MALSLWPLLLLLLLLLLLSFAV. N-linked (GlcNAc...) asparagine glycans are attached at residues Asn65, Asn202, Asn297, Asn366, Asn427, Asn476, Asn540, Asn565, Asn656, Asn824, Asn916, Asn964, Asn1179, and Asn1274.

The protein belongs to the stereocilin family.

It localises to the cell surface. Its subcellular location is the cell projection. The protein resides in the kinocilium. The protein localises to the stereocilium. Functionally, essential to the formation of horizontal top connectors between outer hair cell stereocilia. This Homo sapiens (Human) protein is Stereocilin (STRC).